A 260-amino-acid polypeptide reads, in one-letter code: Hydroxyethylthiazole kinase 1 (260 aa).

Residue methionine 39 participates in substrate binding. Residues arginine 115 and threonine 160 each contribute to the ATP site. Position 187 (glycine 187) interacts with substrate.

It belongs to the Thz kinase family. Mg(2+) serves as cofactor.

The catalysed reaction is 5-(2-hydroxyethyl)-4-methylthiazole + ATP = 4-methyl-5-(2-phosphooxyethyl)-thiazole + ADP + H(+). It functions in the pathway cofactor biosynthesis; thiamine diphosphate biosynthesis; 4-methyl-5-(2-phosphoethyl)-thiazole from 5-(2-hydroxyethyl)-4-methylthiazole: step 1/1. Catalyzes the phosphorylation of the hydroxyl group of 4-methyl-5-beta-hydroxyethylthiazole (THZ). This Streptococcus pneumoniae serotype 4 (strain ATCC BAA-334 / TIGR4) protein is Hydroxyethylthiazole kinase 1.